The sequence spans 443 residues: UDP-N-acetylmuramate--L-alanine ligase (443 aa).

110–116 (GAHGKTS) contacts ATP.

It belongs to the MurCDEF family.

Its subcellular location is the cytoplasm. The enzyme catalyses UDP-N-acetyl-alpha-D-muramate + L-alanine + ATP = UDP-N-acetyl-alpha-D-muramoyl-L-alanine + ADP + phosphate + H(+). The protein operates within cell wall biogenesis; peptidoglycan biosynthesis. Functionally, cell wall formation. The chain is UDP-N-acetylmuramate--L-alanine ligase from Streptococcus gordonii (strain Challis / ATCC 35105 / BCRC 15272 / CH1 / DL1 / V288).